The chain runs to 458 residues: GTPase Der (458 aa).

2 EngA-type G domains span residues 4–169 (PSIA…PKDF) and 178–353 (VMMS…TQHR). GTP-binding positions include 10–17 (GRPNVGKS), 57–61 (DTGGL), 120–123 (NKCE), 184–191 (GRPNVGKS), 231–235 (DTAGI), and 296–299 (NKWD). The 86-residue stretch at 354-439 (MRVTTSVVNE…PIILLWRGKQ (86 aa)) folds into the KH-like domain.

This sequence belongs to the TRAFAC class TrmE-Era-EngA-EngB-Septin-like GTPase superfamily. EngA (Der) GTPase family. Associates with the 50S ribosomal subunit.

Functionally, GTPase that plays an essential role in the late steps of ribosome biogenesis. This chain is GTPase Der, found in Prochlorococcus marinus (strain MIT 9515).